A 260-amino-acid polypeptide reads, in one-letter code: DNA repair protein RecO (260 aa).

It belongs to the RecO family.

Its function is as follows. Involved in DNA repair and RecF pathway recombination. The chain is DNA repair protein RecO from Salinibacter ruber (strain DSM 13855 / M31).